A 291-amino-acid chain; its full sequence is Ribosome biogenesis protein BRX1 (291 aa).

Positions 31-232 (QRTLLISSRG…VILILEGSFG (202 aa)) constitute a Brix domain. Serine 285 carries the post-translational modification Phosphoserine.

This sequence belongs to the BRX1 family. In terms of assembly, part of a complex that includes BRX1, RPF1, RPF2 and SSF1 or SSF2.

Its subcellular location is the nucleus. It is found in the nucleolus. In terms of biological role, required for biogenesis of the 60S ribosomal subunit. The protein is Ribosome biogenesis protein BRX1 (BRX1) of Saccharomyces cerevisiae (strain ATCC 204508 / S288c) (Baker's yeast).